Consider the following 339-residue polypeptide: MNTRFLDACWGKPVDTVPVWLMRQAGRYLPDYMRVRSKCTFLELCKTPELATEVTVQPVDILGVDAAILFSDILTPIEPMGMELDFTPGPVFAKPIRTMADVEALKIPKMETDVPYVLDAVKLLRKELAAKVPLIGFGGAPFTLACYMVEGKGSKDFAALKKMMYADPEVYAALMEKITTMDMEYLNAQIKAGAQAIQIFDTWGGMLSPADYERYVLPYTQRLINGLDRTNIPVIHFVKGAGTMLEIVKQAGGDVMGLDWHVNLGKARDILGDMAVQGNLDPTVLFAPNEIIEREVKRVLDENAGRPGLIFNLGHGILPTVPPEKAIFMVDCVHRLSRK.

Residues 23–27, D72, Y147, T202, and H315 each bind substrate; that span reads RQAGR.

This sequence belongs to the uroporphyrinogen decarboxylase family. In terms of assembly, homodimer.

Its subcellular location is the cytoplasm. It carries out the reaction uroporphyrinogen III + 4 H(+) = coproporphyrinogen III + 4 CO2. It functions in the pathway porphyrin-containing compound metabolism; protoporphyrin-IX biosynthesis; coproporphyrinogen-III from 5-aminolevulinate: step 4/4. Functionally, catalyzes the decarboxylation of four acetate groups of uroporphyrinogen-III to yield coproporphyrinogen-III. This Geobacter sp. (strain M21) protein is Uroporphyrinogen decarboxylase.